The following is an 892-amino-acid chain: MSGVNEIRSTFLNFFAENGHEIVPSSPLVPRNDPTLMFTNAGMVQFKNVFTGVEKRPYQRATTSQKCVRAGGKHNDLDNVGYTARHLTFFEMLGNFSFGDYFKERAIELAWKLITKDFGLNKDKLLVTVYHTDDEAHGLWKKIAGFSDDRIIRIPTSDNFWAMGDTGPCGPCSEIFIDRGDHIWGGPPGSPEEDGDRFLEFWNLVFMQYEQVTKEERVDLPRPSIDTGMGLERMACIMQGVDSVFETDLFRHLIDATASALGSGPNEQTVASFRVIADHLRSSAFLVSDGVLPSNEGRGYVLRRIMRRAMRHAQLLGAKEPLMHRLVWALVREMGQAYPELMRAEKLIEETLRLEETRFRKTLTRGLAILDEKSASLKKGDMFDGDVAFTLYDTYGFPLDLTQDALKSRGIGVDQSAFTDAMERQKAKARESWKGSGEAASEAIWFPLREKLGATEFLGYETESAEGVVSALVKDGQEAASLKAGETGALVLNQTPFYAESGGQVGDTGVLLGEGGVKFRVTDTQKKLGDLFVHVGTVESGELKLGTALQLEVDHSRRSSIRAHHSATHLIHEALRQVLGDHIAQRGSMVAPDRLRFDFVHPKPITAEELARVEDIANDVVLENDEVTTRVMGVDEAREAGARALFGEKYGDEVRVVSMGRTARERGANALGWSVELCGGTHVRRTGDIGLITLTGESAVASGVRRIEALTGNYARKHANDTMALAKTAANELRTSIDDVPARITALMEERKKLERELSDARKKLAMGGGAAASNGAASGVREVGDVKLMARAVEGIEMKDLKSLADDGKKQIGSGVVAIVGVTGDGKAGIVVGVTADLTARFNAVNLVRVASEALGGKGGGGRPDMAQAGGPDGAKAPEALAAIEKAMAGA.

4 residues coordinate Zn(2+): His-565, His-569, Cys-678, and His-682. The tract at residues 857 to 876 (GGKGGGGRPDMAQAGGPDGA) is disordered.

The protein belongs to the class-II aminoacyl-tRNA synthetase family. The cofactor is Zn(2+).

It localises to the cytoplasm. It catalyses the reaction tRNA(Ala) + L-alanine + ATP = L-alanyl-tRNA(Ala) + AMP + diphosphate. In terms of biological role, catalyzes the attachment of alanine to tRNA(Ala) in a two-step reaction: alanine is first activated by ATP to form Ala-AMP and then transferred to the acceptor end of tRNA(Ala). Also edits incorrectly charged Ser-tRNA(Ala) and Gly-tRNA(Ala) via its editing domain. The chain is Alanine--tRNA ligase from Bradyrhizobium diazoefficiens (strain JCM 10833 / BCRC 13528 / IAM 13628 / NBRC 14792 / USDA 110).